The following is a 120-amino-acid chain: Response regulator receiver protein CpdR (120 aa).

In terms of domain architecture, Response regulatory spans Arg3 to Leu117. The residue at position 52 (Asp52) is a 4-aspartylphosphate.

Is phosphorylated by ChpT-P on Asp-52.

Its subcellular location is the cytoplasm. Its function is as follows. Component of a regulatory phosphorelay system that controls B.abortus cell growth, division, and intracellular survival inside mammalian host cells. This signaling pathway is composed of CckA, ChpT, CtrA and CpdR. CpdR is a response regulator substrate of ChpT. Unphosphorylated CpdR controls steady-state levels of CtrA in the B.abortus cell, likely via CtrA destabilization and activation of its proteolysis. The protein is Response regulator receiver protein CpdR of Brucella abortus (strain 2308).